A 65-amino-acid chain; its full sequence is Defensin-B2 (65 aa).

Residues 1–23 (MEARVLLLCAVLFLLVHTPPAAG) form the signal peptide. 3 disulfides stabilise this stretch: cysteine 29-cysteine 56, cysteine 36-cysteine 50, and cysteine 40-cysteine 57.

This sequence belongs to the beta-defensin family. Lowly expressed in spleen, and lung.

It localises to the secreted. Its function is as follows. Has antimicrobial activity. The polypeptide is Defensin-B2 (Ornithorhynchus anatinus (Duckbill platypus)).